The primary structure comprises 180 residues: Cytidylate kinase (180 aa).

7-15 (GPPGSGTTT) provides a ligand contact to ATP.

It belongs to the cytidylate kinase family. Type 2 subfamily.

The protein resides in the cytoplasm. The enzyme catalyses CMP + ATP = CDP + ADP. The catalysed reaction is dCMP + ATP = dCDP + ADP. The sequence is that of Cytidylate kinase (cmk) from Archaeoglobus fulgidus (strain ATCC 49558 / DSM 4304 / JCM 9628 / NBRC 100126 / VC-16).